A 107-amino-acid polypeptide reads, in one-letter code: uncharacterized protein (107 aa).

Its subcellular location is the mitochondrion. This is an uncharacterized protein from Arabidopsis thaliana (Mouse-ear cress).